The following is a 534-amino-acid chain: Benzaldehyde dehydrogenase, mitochondrial (534 aa).

The N-terminal 29 residues, 1–29, are a transit peptide targeting the mitochondrion; that stretch reads MAAHRFSSLLSRSVPLLSRGGKQSYLGRG. Residues 199 to 202, 225 to 228, 258 to 259, 278 to 279, and 301 to 303 contribute to the NAD(+) site; these read IPWN, KTAE, GP, GS, and ELG. Residue glutamate 301 is the Proton acceptor of the active site. Cysteine 335 functions as the Nucleophile in the catalytic mechanism. NAD(+) is bound by residues 381–385 and 432–434; these read DQFEK and EIF.

It belongs to the aldehyde dehydrogenase family. Homotetramer. As to expression, expressed predominantly in the upper and lower flower petal lobes, and, at low levels, in flower tubes, pistils, stamens and sepals.

It is found in the mitochondrion. The catalysed reaction is an aldehyde + NAD(+) + H2O = a carboxylate + NADH + 2 H(+). It carries out the reaction acetaldehyde + NAD(+) + H2O = acetate + NADH + 2 H(+). It catalyses the reaction benzaldehyde + NAD(+) + H2O = benzoate + NADH + 2 H(+). The enzyme catalyses 2-phenylacetaldehyde + NAD(+) + H2O = 2-phenylacetate + NADH + 2 H(+). It participates in aromatic compound metabolism. Inhibited by disulfiram. Component of the floral volatile benzenoid/phenylpropanoid (FVBP) biosynthetic pathway. Catalyzes the oxidation of benzaldehyde to benzoic acid (BA). Capable of oxidizing a broad spectrum of aliphatic aldehydes; increased carbon chain length results in a decrease in its efficiency. The chain is Benzaldehyde dehydrogenase, mitochondrial from Antirrhinum majus (Garden snapdragon).